The following is a 487-amino-acid chain: Polyamine oxidase 4 (487 aa).

4 residues coordinate FAD: glutamate 53, arginine 61, valine 242, and glutamate 429. The Microbody targeting signal signature appears at 485–487 (CRT).

It belongs to the flavin monoamine oxidase family. FAD serves as cofactor. As to expression, widely expressed.

The protein localises to the peroxisome. The enzyme catalyses spermine + O2 + H2O = 3-aminopropanal + spermidine + H2O2. It carries out the reaction norspermine + O2 + H2O = norspermidine + 3-aminopropanal + H2O2. The catalysed reaction is thermospermine + O2 + H2O = 3-aminopropanal + spermidine + H2O2. It participates in amine and polyamine degradation; spermine degradation. Flavoenzyme involved in polyamine back-conversion. Catalyzes the oxidation of the secondary amino group of polyamines, such as spermine. Substrate preference is spermine &gt; thermospermine &gt; norspermine. No activity detected when putrescine, spermidine or N(1)-acetylspermidine are used as substrates. Plays an important role in the regulation of polyamine intracellular concentration. This is Polyamine oxidase 4 from Oryza sativa subsp. japonica (Rice).